The chain runs to 487 residues: Polyamine oxidase 4 (487 aa).

Glu53, Arg61, Val242, and Glu429 together coordinate FAD. The short motif at 485–487 (CRT) is the Microbody targeting signal element.

Belongs to the flavin monoamine oxidase family. The cofactor is FAD. As to expression, widely expressed.

The protein localises to the peroxisome. The enzyme catalyses spermine + O2 + H2O = 3-aminopropanal + spermidine + H2O2. It carries out the reaction norspermine + O2 + H2O = norspermidine + 3-aminopropanal + H2O2. It catalyses the reaction thermospermine + O2 + H2O = 3-aminopropanal + spermidine + H2O2. It participates in amine and polyamine degradation; spermine degradation. Flavoenzyme involved in polyamine back-conversion. Catalyzes the oxidation of the secondary amino group of polyamines, such as spermine. Substrate preference is spermine &gt; thermospermine &gt; norspermine. No activity detected when putrescine, spermidine or N(1)-acetylspermidine are used as substrates. Plays an important role in the regulation of polyamine intracellular concentration. In Oryza sativa subsp. japonica (Rice), this protein is Polyamine oxidase 4.